The sequence spans 205 residues: Golgi apparatus membrane protein TVP23 homolog B (205 aa).

Position 1 is an N-acetylmethionine (M1). A disordered region spans residues 1-21; that stretch reads MLQQDSNDDTEDVSLFDAEEE. 4 helical membrane passes run 34–53, 54–72, 126–146, and 152–172; these read PVAS…VYLL, CGLL…ILLL, IFWL…FSAL, and KWLA…YGYI.

Belongs to the TVP23 family.

The protein localises to the membrane. This is Golgi apparatus membrane protein TVP23 homolog B (TVP23B) from Homo sapiens (Human).